The sequence spans 536 residues: Apoptosis inhibitor 5 homolog (536 aa).

Residues 462 to 536 (ITFGEKAAAN…GYRNRRFNKY (75 aa)) form a disordered region. Residues 472–487 (GKDKDQEPEKKSRPSN) are compositionally biased toward basic and acidic residues. The segment covering 498–507 (KYSNKVNQSY) has biased composition (polar residues). The span at 516–528 (RGGGGGGGSGGGY) shows a compositional bias: gly residues.

Belongs to the API5 family.

The protein resides in the nucleus. Its function is as follows. Antiapoptotic factor. Also known to efficiently suppress E2F1-induced apoptosis. This is Apoptosis inhibitor 5 homolog from Drosophila melanogaster (Fruit fly).